The sequence spans 703 residues: MGFDNPRSERFEDDPEISKIPTTSGVKVKYHIDGTQIPEQSSKKSRKNETRNKFLKTRVLSRVFSEDYERVKKRVLVLDPRGQLIHRWNKIFLVACLVSLFVDPLFFYLPVVREEVCIDIGKTLEVILTVVRSFGDLFYIVQICMKFRTAYVAPSSKVFGRGELVLTYSKIALRYFSKGFWLDFIAALPLPQVLIWIIIPTLRGSTMANTKNVLRFFIIFQYIPRLYLIFPLSSQIVKATGVVTETAWAGAAYNLMLYMLASHILGACWYLLSIERQEACWKSVCNMEKSNCQYGFFNCHSIKDAPRVAWFIASNVTNLCSPNAGFYPFGIYADAMTSKVTSSPFFNKYFYCLWWGLRNLSSLGQGLLTSTFIGEIMVAIVVATLGLVLFALLIGNMQTYLQSITVRLEEWRVKRTDTEQWMHHRQLPPELRESIRKYNQYKWVATRGVEEEDLLKGLPLDLRREIKRHLCLELVRGVPLFDQMDERMLDAICERLKPALCTEGTYLVREGDPVNEMLFIIRGHLDSYTTNGGRDGFFNSCRIGPGDFCGEELLTWALDPRPSVILPSSTRTVKAFSEVEAFALIAEDLKFVASQFRRLHSKQLRHKFRFYSHQWRTWAACFIQAAWRRHKKRKEAAELRAKENLVAASEAENEIAKKYGKGFVVYGTRVARSTRKGVNMHSGTNSGVVSSLQKPTEPDFSDE.

Residues 1–10 (MGFDNPRSER) are compositionally biased toward basic and acidic residues. Residues 1–23 (MGFDNPRSERFEDDPEISKIPTT) form a disordered region. 5 helical membrane-spanning segments follow: residues 91-111 (IFLV…YLPV), 179-199 (GFWL…WIII), 216-236 (FFII…SSQI), 255-275 (LMLY…LSIE), and 372-392 (FIGE…LFAL). 480–565 (LFDQMDERML…WALDPRPSVI (86 aa)) contributes to the a nucleoside 3',5'-cyclic phosphate binding site. Residues 616–644 (RTWAACFIQAAWRRHKKRKEAAELRAKEN) enclose the IQ domain. The disordered stretch occupies residues 676-703 (KGVNMHSGTNSGVVSSLQKPTEPDFSDE). A compositionally biased stretch (polar residues) spans 681–694 (HSGTNSGVVSSLQK).

Belongs to the cyclic nucleotide-gated cation channel (TC 1.A.1.5) family. Interacts (via N-terminus) with DMI1 (via c-terminus). The Nod factor has no effect on this interaction, implying that the complex is maintained after activation. Expressed in roots, stems, leaves, flowers and pods.

The protein localises to the nucleus membrane. Functionally, cyclic nucleotide-gated channel involved in the establishment of both rhizobial and mycorrhizal associations. Required for full activation of nuclear-localized Ca(2+) oscillations by Nod and Myc factors. Simultaneous activation of the K(+)-permeable channel DMI1 and the Ca(2+) channel CNGC15 can give rise to sustained Ca(2+) oscillations. May function during fertilization in both female and male gametophytic Ca(2+) signaling. The sequence is that of Protein CNGC15c from Medicago truncatula (Barrel medic).